Consider the following 137-residue polypeptide: MPTINQLVRKPRKSKVEKPKSPALNVGYNSHKKVQTNVSSPQKRGVATRVGTMTPRKPNSALRKFARVRLSNLIEVTAYIPGIGHNLQEHSVVLLRGGRVKDLPGVRYHIVRGALDTAGVNDRKQGRSKYGTKRPKA.

Positions 1-57 (MPTINQLVRKPRKSKVEKPKSPALNVGYNSHKKVQTNVSSPQKRGVATRVGTMTPRK) are disordered. Aspartate 102 carries the 3-methylthioaspartic acid modification.

The protein belongs to the universal ribosomal protein uS12 family. In terms of assembly, part of the 30S ribosomal subunit. Contacts proteins S8 and S17. May interact with IF1 in the 30S initiation complex.

With S4 and S5 plays an important role in translational accuracy. Functionally, interacts with and stabilizes bases of the 16S rRNA that are involved in tRNA selection in the A site and with the mRNA backbone. Located at the interface of the 30S and 50S subunits, it traverses the body of the 30S subunit contacting proteins on the other side and probably holding the rRNA structure together. The combined cluster of proteins S8, S12 and S17 appears to hold together the shoulder and platform of the 30S subunit. In Streptococcus pneumoniae (strain Hungary19A-6), this protein is Small ribosomal subunit protein uS12.